We begin with the raw amino-acid sequence, 891 residues long: UPF0182 protein Glov_0814 (891 aa).

A run of 7 helical transmembrane segments spans residues Leu-6–Tyr-26, Gly-51–Ala-71, Ile-102–Trp-122, Phe-164–Ala-184, Ile-202–Leu-222, Thr-244–Trp-264, and Gly-266–Met-286.

The protein belongs to the UPF0182 family.

It localises to the cell membrane. The chain is UPF0182 protein Glov_0814 from Trichlorobacter lovleyi (strain ATCC BAA-1151 / DSM 17278 / SZ) (Geobacter lovleyi).